Reading from the N-terminus, the 79-residue chain is Conotoxin VnMEKL-024 (79 aa).

A signal peptide spans 1-19 (MQKLTILLLVAAVLMSTQA). Positions 20-50 (LIRGGVEKRQEAKRNFFSKRKTTAESWWEGE) are excised as a propeptide. 3 cysteine pairs are disulfide-bonded: Cys51–Cys65, Cys58–Cys69, and Cys64–Cys76.

The protein belongs to the conotoxin O2 superfamily. In terms of tissue distribution, expressed by the venom duct.

It is found in the secreted. The polypeptide is Conotoxin VnMEKL-024 (Conus ventricosus (Mediterranean cone)).